The sequence spans 208 residues: Heavy metal-associated isoprenylated plant protein 42 (208 aa).

The region spanning 6 to 70 is the HMA domain; it reads FPICILKMNL…AVAKLGQSPQ (65 aa). A disordered region spans residues 93–116; that stretch reads ATNKTQDKPSPPAPPVTATTPVET. The residue at position 205 (cysteine 205) is a Cysteine methyl ester. The S-farnesyl cysteine moiety is linked to residue cysteine 205. A propeptide spans 206 to 208 (removed in mature form); sequence SIM.

This sequence belongs to the HIPP family.

Probable heavy-metal-binding protein. This Arabidopsis thaliana (Mouse-ear cress) protein is Heavy metal-associated isoprenylated plant protein 42.